A 301-amino-acid polypeptide reads, in one-letter code: Phospholipase A1 VesT1.02 (301 aa).

Disulfide bonds link cysteine 87–cysteine 294, cysteine 176–cysteine 245, cysteine 181–cysteine 262, cysteine 219–cysteine 228, cysteine 240–cysteine 246, and cysteine 267–cysteine 269. Residue serine 137 is the Nucleophile of the active site. Aspartate 165 acts as the Charge relay system in catalysis. Histidine 230 acts as the Charge relay system in catalysis.

This sequence belongs to the AB hydrolase superfamily. Lipase family. Is not glycosylated. As to expression, expressed by the venom gland.

The protein localises to the secreted. The enzyme catalyses a 1,2-diacyl-sn-glycero-3-phosphocholine + H2O = a 2-acyl-sn-glycero-3-phosphocholine + a fatty acid + H(+). Its function is as follows. Catalyzes the hydrolysis of phosphatidylcholine with phospholipase A1 activity. Shows hemolytic activity. The sequence is that of Phospholipase A1 VesT1.02 from Vespa tropica (Greater banded hornet).